A 340-amino-acid chain; its full sequence is DNA primase large subunit PriL (340 aa).

[4Fe-4S] cluster-binding residues include Cys229, Cys301, Cys310, and Cys318.

Belongs to the eukaryotic-type primase large subunit family. As to quaternary structure, heterodimer of a small subunit (PriS) and a large subunit (PriL). [4Fe-4S] cluster serves as cofactor.

Functionally, regulatory subunit of DNA primase, an RNA polymerase that catalyzes the synthesis of short RNA molecules used as primers for DNA polymerase during DNA replication. Stabilizes and modulates the activity of the small subunit, increasing the rate of DNA synthesis, and conferring RNA synthesis capability. The DNA polymerase activity may enable DNA primase to also catalyze primer extension after primer synthesis. May also play a role in DNA repair. This Thermoplasma acidophilum (strain ATCC 25905 / DSM 1728 / JCM 9062 / NBRC 15155 / AMRC-C165) protein is DNA primase large subunit PriL.